Consider the following 201-residue polypeptide: Transmembrane 4 L6 family member 18 (201 aa).

The Cytoplasmic portion of the chain corresponds to 1-9; sequence MGSRKCGGC. A helical membrane pass occupies residues 10–30; sequence LSCLLIPLALWSIIVNILLYF. The Extracellular portion of the chain corresponds to 31 to 49; it reads PNGQTSYASSNKLTNYVWY. Residues 50–70 traverse the membrane as a helical segment; the sequence is FEGICFSGIMMLIVTTVLLVL. Over 71 to 93 the chain is Cytoplasmic; it reads ENNNNYKCCQSENCSKKYVTLLS. A helical membrane pass occupies residues 94–114; that stretch reads IIFSSLGIAFSGYCLVISALG. Residues 115 to 157 are Extracellular-facing; that stretch reads LVQGPYCRTLDGWEYAFEGTAGRFLTDSSIWIQCLEPAHVVEW. The chain crosses the membrane as a helical span at residues 158–178; sequence NIILFSILITLSGLQVIICLI. The Cytoplasmic segment spans residues 179-201; sequence RVVMQLSKILCGSYSVIFQPGII.

It belongs to the L6 tetraspanin family.

Its subcellular location is the membrane. This is Transmembrane 4 L6 family member 18 (TM4SF18) from Homo sapiens (Human).